The sequence spans 229 residues: Peptidase E (229 aa).

Residues Ser120, Asp135, and His157 each act as charge relay system in the active site.

Belongs to the peptidase S51 family.

The protein localises to the cytoplasm. It catalyses the reaction Dipeptidase E catalyzes the hydrolysis of dipeptides Asp-|-Xaa. It does not act on peptides with N-terminal Glu, Asn or Gln, nor does it cleave isoaspartyl peptides.. Functionally, hydrolyzes dipeptides containing N-terminal aspartate residues. May play a role in allowing the cell to use peptide aspartate to spare carbon otherwise required for the synthesis of the aspartate family of amino acids. The chain is Peptidase E from Salmonella paratyphi C (strain RKS4594).